A 65-amino-acid polypeptide reads, in one-letter code: Protein translocase subunit SecE (65 aa).

Residues 38–58 (IVIVTVVFFLIFFYALDLGIG) form a helical membrane-spanning segment.

Belongs to the SecE/SEC61-gamma family. Component of the Sec protein translocase complex. Heterotrimer consisting of SecY, SecE and SecG subunits. The heterotrimers can form oligomers, although 1 heterotrimer is thought to be able to translocate proteins. Interacts with the ribosome. Interacts with SecDF, and other proteins may be involved. Interacts with SecA.

It localises to the cell membrane. Its function is as follows. Essential subunit of the Sec protein translocation channel SecYEG. Clamps together the 2 halves of SecY. May contact the channel plug during translocation. The sequence is that of Protein translocase subunit SecE from Staphylococcus carnosus (strain TM300).